The chain runs to 252 residues: 2-succinyl-6-hydroxy-2,4-cyclohexadiene-1-carboxylate synthase (252 aa).

It belongs to the AB hydrolase superfamily. MenH family. In terms of assembly, monomer.

It carries out the reaction 5-enolpyruvoyl-6-hydroxy-2-succinyl-cyclohex-3-ene-1-carboxylate = (1R,6R)-6-hydroxy-2-succinyl-cyclohexa-2,4-diene-1-carboxylate + pyruvate. It participates in quinol/quinone metabolism; 1,4-dihydroxy-2-naphthoate biosynthesis; 1,4-dihydroxy-2-naphthoate from chorismate: step 3/7. The protein operates within quinol/quinone metabolism; menaquinone biosynthesis. In terms of biological role, catalyzes a proton abstraction reaction that results in 2,5-elimination of pyruvate from 2-succinyl-5-enolpyruvyl-6-hydroxy-3-cyclohexene-1-carboxylate (SEPHCHC) and the formation of 2-succinyl-6-hydroxy-2,4-cyclohexadiene-1-carboxylate (SHCHC). The chain is 2-succinyl-6-hydroxy-2,4-cyclohexadiene-1-carboxylate synthase from Escherichia fergusonii (strain ATCC 35469 / DSM 13698 / CCUG 18766 / IAM 14443 / JCM 21226 / LMG 7866 / NBRC 102419 / NCTC 12128 / CDC 0568-73).